A 417-amino-acid polypeptide reads, in one-letter code: MIDNILFDLIEREAKRERENIELIASENFVSSDVRQAVGSVLTNKYAEGYPSKRYYGGCSVVDDIENLAISRAMELFGASYANVQPHSGSQANMAAIMSLIKPGDKILGMELSHGGHLTHGSKVSFSGMFFDAYSYGVSRDSEMIDYDDVKNIAKACRPNLIIAGASSYSREIDFKKFREIANEVSAYLLCDIAHTAGLVATGFHNSPIDVAHLTTSTTHKTLRGPRGGLILAGKEFNTMINYNNKERTLDSAVNSCVFPGTQGGPLMHVIAGKAVAFKEALNKEFKDYISRVIENTKAMAEYFISEGLRIVSGGTDNHLFLVDLSGLGITGADAEKILESVNITLNKNAIPFDSKNPSVASGIRIGAPAITSRGLNRDDSIKVAHFIIRALKTKSTDELRKIKQEVIGFISSFDMP.

Residues Leu-112 and 116 to 118 (GHL) contribute to the (6S)-5,6,7,8-tetrahydrofolate site. Residue Lys-221 is modified to N6-(pyridoxal phosphate)lysine. Position 247 (Glu-247) interacts with (6S)-5,6,7,8-tetrahydrofolate.

It belongs to the SHMT family. In terms of assembly, homodimer. Pyridoxal 5'-phosphate is required as a cofactor.

The protein localises to the cytoplasm. It catalyses the reaction (6R)-5,10-methylene-5,6,7,8-tetrahydrofolate + glycine + H2O = (6S)-5,6,7,8-tetrahydrofolate + L-serine. The protein operates within one-carbon metabolism; tetrahydrofolate interconversion. It participates in amino-acid biosynthesis; glycine biosynthesis; glycine from L-serine: step 1/1. Its function is as follows. Catalyzes the reversible interconversion of serine and glycine with tetrahydrofolate (THF) serving as the one-carbon carrier. This reaction serves as the major source of one-carbon groups required for the biosynthesis of purines, thymidylate, methionine, and other important biomolecules. Also exhibits THF-independent aldolase activity toward beta-hydroxyamino acids, producing glycine and aldehydes, via a retro-aldol mechanism. In Borrelia duttonii (strain Ly), this protein is Serine hydroxymethyltransferase.